Reading from the N-terminus, the 872-residue chain is Alanine--tRNA ligase (872 aa).

Zn(2+) is bound by residues His567, His571, Cys669, and His673.

It belongs to the class-II aminoacyl-tRNA synthetase family. It depends on Zn(2+) as a cofactor.

The protein localises to the cytoplasm. The catalysed reaction is tRNA(Ala) + L-alanine + ATP = L-alanyl-tRNA(Ala) + AMP + diphosphate. Catalyzes the attachment of alanine to tRNA(Ala) in a two-step reaction: alanine is first activated by ATP to form Ala-AMP and then transferred to the acceptor end of tRNA(Ala). Also edits incorrectly charged Ser-tRNA(Ala) and Gly-tRNA(Ala) via its editing domain. This chain is Alanine--tRNA ligase, found in Streptococcus thermophilus (strain ATCC BAA-491 / LMD-9).